We begin with the raw amino-acid sequence, 874 residues long: Alanine--tRNA ligase (874 aa).

Residues His563, His567, Cys665, and His669 each contribute to the Zn(2+) site.

Belongs to the class-II aminoacyl-tRNA synthetase family. Zn(2+) is required as a cofactor.

It is found in the cytoplasm. It carries out the reaction tRNA(Ala) + L-alanine + ATP = L-alanyl-tRNA(Ala) + AMP + diphosphate. Its function is as follows. Catalyzes the attachment of alanine to tRNA(Ala) in a two-step reaction: alanine is first activated by ATP to form Ala-AMP and then transferred to the acceptor end of tRNA(Ala). Also edits incorrectly charged Ser-tRNA(Ala) and Gly-tRNA(Ala) via its editing domain. In Actinobacillus pleuropneumoniae serotype 3 (strain JL03), this protein is Alanine--tRNA ligase.